The following is a 331-amino-acid chain: MLKLSEFLVQQERQHAVADNVLTLIQDIAATCQAVAREIRYGALRGNMGSAGRENVQGEEQKALDVISNDIFTAMASKQPHVAAVASEEMAQAQVFAGKQGKYLLVFDPLDGSSNVNLNLSVGSIFSILPAPEGSVDEASFLQAGSRQLAAGYALYGTSTMLVLTMGHGVHGFTLDPDQGEFYLTHPGLTIAASTEEFAINMSNQRFWQPPVQRYIAECIAGSSGPRGKDFNMRWVATMVAEVHRLLVRGGVFLYPLDSRAVGRGGRLRLLYEANPMSLLVEQAGGLATTGHRRILDVEPAGLHQRVAVMMGAREEVERLQDYHSFTDPTA.

Mg(2+) is bound by residues Glu88, Asp108, Leu110, and Asp111. Substrate contacts are provided by residues 111–114 (DGSS) and Asn201. Glu273 provides a ligand contact to Mg(2+).

Belongs to the FBPase class 1 family. As to quaternary structure, homotetramer. The cofactor is Mg(2+).

It is found in the cytoplasm. The enzyme catalyses beta-D-fructose 1,6-bisphosphate + H2O = beta-D-fructose 6-phosphate + phosphate. Its pathway is carbohydrate biosynthesis; gluconeogenesis. The sequence is that of Fructose-1,6-bisphosphatase class 1 from Methylobacillus flagellatus (strain ATCC 51484 / DSM 6875 / VKM B-1610 / KT).